The chain runs to 435 residues: Shikimate O-hydroxycinnamoyltransferase (435 aa).

Active-site proton acceptor residues include histidine 153 and aspartate 382.

The protein belongs to the plant acyltransferase family. As to expression, highly expressed in stem vascular tissues.

It catalyses the reaction shikimate + 4-coumaroyl-CoA = trans-4-coumaroylshikimate + CoA. Functionally, acyltransferase involved in the biosynthesis of lignin. The affinity for shikimate as acceptor is 100-fold higher than for quinate. The most efficient donors are caffeoyl-CoA &gt; p-coumaroyl-CoA &gt; feruloyl-CoA &gt;&gt; sinapoyl-CoA. The chain is Shikimate O-hydroxycinnamoyltransferase (HST) from Nicotiana tabacum (Common tobacco).